Here is a 519-residue protein sequence, read N- to C-terminus: Steroid 17-alpha-hydroxylase/17,20 lyase (519 aa).

Cysteine 455 is a heme binding site.

It belongs to the cytochrome P450 family. Heme serves as cofactor.

It is found in the membrane. The enzyme catalyses a C21-steroid + reduced [NADPH--hemoprotein reductase] + O2 = a 17alpha-hydroxy-C21-steroid + oxidized [NADPH--hemoprotein reductase] + H2O + H(+). It carries out the reaction 17alpha-hydroxyprogesterone + reduced [NADPH--hemoprotein reductase] + O2 = androst-4-ene-3,17-dione + acetate + oxidized [NADPH--hemoprotein reductase] + H2O + 2 H(+). The catalysed reaction is 17alpha-hydroxypregnenolone + reduced [NADPH--hemoprotein reductase] + O2 = 3beta-hydroxyandrost-5-en-17-one + acetate + oxidized [NADPH--hemoprotein reductase] + H2O + 2 H(+). The protein operates within lipid metabolism; steroid biosynthesis. Functionally, conversion of pregnenolone and progesterone to their 17-alpha-hydroxylated products and subsequently to dehydroepiandrosterone (DHEA) and androstenedione. Catalyzes both the 17-alpha-hydroxylation and the 17,20-lyase reaction. The chain is Steroid 17-alpha-hydroxylase/17,20 lyase (CYP17A1) from Rana dybowskii (Dybovsky's frog).